Reading from the N-terminus, the 95-residue chain is Cell division topological specificity factor (95 aa).

Belongs to the MinE family.

Its function is as follows. Prevents the cell division inhibition by proteins MinC and MinD at internal division sites while permitting inhibition at polar sites. This ensures cell division at the proper site by restricting the formation of a division septum at the midpoint of the long axis of the cell. The chain is Cell division topological specificity factor from Methylorubrum extorquens (strain PA1) (Methylobacterium extorquens).